The primary structure comprises 164 residues: Crossover junction endodeoxyribonuclease RuvC (164 aa).

Residues D7, E67, and D140 contribute to the active site. Residues D7, E67, and D140 each contribute to the Mg(2+) site.

Belongs to the RuvC family. Homodimer which binds Holliday junction (HJ) DNA. The HJ becomes 2-fold symmetrical on binding to RuvC with unstacked arms; it has a different conformation from HJ DNA in complex with RuvA. In the full resolvosome a probable DNA-RuvA(4)-RuvB(12)-RuvC(2) complex forms which resolves the HJ. Mg(2+) is required as a cofactor.

It localises to the cytoplasm. The catalysed reaction is Endonucleolytic cleavage at a junction such as a reciprocal single-stranded crossover between two homologous DNA duplexes (Holliday junction).. Functionally, the RuvA-RuvB-RuvC complex processes Holliday junction (HJ) DNA during genetic recombination and DNA repair. Endonuclease that resolves HJ intermediates. Cleaves cruciform DNA by making single-stranded nicks across the HJ at symmetrical positions within the homologous arms, yielding a 5'-phosphate and a 3'-hydroxyl group; requires a central core of homology in the junction. The consensus cleavage sequence is 5'-(A/T)TT(C/G)-3'. Cleavage occurs on the 3'-side of the TT dinucleotide at the point of strand exchange. HJ branch migration catalyzed by RuvA-RuvB allows RuvC to scan DNA until it finds its consensus sequence, where it cleaves and resolves the cruciform DNA. This chain is Crossover junction endodeoxyribonuclease RuvC, found in Alkaliphilus metalliredigens (strain QYMF).